The following is a 457-amino-acid chain: Ribosomal protein uS12 methylthiotransferase RimO (457 aa).

In terms of domain architecture, MTTase N-terminal spans 30-140; it reads PTIGMVSLGC…VLDAVHGAVP (111 aa). Residues C39, C75, C104, C171, C175, and C178 each coordinate [4Fe-4S] cluster. The Radical SAM core domain maps to 157–386; sequence LTPRHFSYLK…MQKAQAISEA (230 aa). The TRAM domain occupies 389 to 456; the sequence is AARIGQRLEV…EYDLWGRAVL (68 aa).

The protein belongs to the methylthiotransferase family. RimO subfamily. The cofactor is [4Fe-4S] cluster.

The protein resides in the cytoplasm. The catalysed reaction is L-aspartate(89)-[ribosomal protein uS12]-hydrogen + (sulfur carrier)-SH + AH2 + 2 S-adenosyl-L-methionine = 3-methylsulfanyl-L-aspartate(89)-[ribosomal protein uS12]-hydrogen + (sulfur carrier)-H + 5'-deoxyadenosine + L-methionine + A + S-adenosyl-L-homocysteine + 2 H(+). Functionally, catalyzes the methylthiolation of an aspartic acid residue of ribosomal protein uS12. The sequence is that of Ribosomal protein uS12 methylthiotransferase RimO from Cereibacter sphaeroides (strain ATCC 17025 / ATH 2.4.3) (Rhodobacter sphaeroides).